A 332-amino-acid chain; its full sequence is FAD-dependent monooxygenase elcE (332 aa).

Belongs to the oxygen-dependent FAD-linked oxidoreductase family.

It participates in secondary metabolite biosynthesis. Functionally, FAD-dependent monooxygenase; part of the gene cluster that mediates the biosynthesis of elsinochrome C, a perelyenequinone phytotoxin structurally similar to cercosporin. The first step of elsinochrome C biosynthesis is performed by the polyketide synthase elcA which catalyzes the formation of nor-toralactone. The starter unit acyltransferase (SAT) domain of elcA initiates polyketide extension by the selective utilization of acetyl-CoA, which is elongated to the heptaketide in the beta-ketoacyl synthase (KS) domain by successive condensations with six malonyl units introduced by the malonyl acyltransferase (MAT) domain. The product template (PT) domain catalyzes C4-C9 and C2-C11 aldol cyclizations and dehydrations to a trihydroxynaphthalene, which is thought to be delivered to the thioesterase (TE) domain for product release. The bifunctional enzyme elcB then methylates nor-toralactone to toralactone before conducting an unusual oxidative aromatic ring opening. The next step in perylenequinone biosynthesis is an O-methylation at the nascent OH-6 of the elcB product performed by the O-methyltransferase elcD. The oxidative coupling of the two monomeric naphthol units in perylenequinone biosynthesis is catalyzed by the FAD-dependent monooxygenase elcE and the multicopper oxidase elcG. ElcG might catalyze the first intermolecular coupling in a regio- and stereo-selective manner via a phenol radical coupling mechanism and the elcE could forge the second C-C bond intramolecularly via a hydride transfer mechanism. The fasciclin domain-containing protein elcF might also play a role duting this step. The last piece of the puzzle in the biosynthesis of elsinochrome C is the additional annulation by enolate coupling to afford the dihydrobenzo(ghi)perylenequinone system, catalyzed by the FAD-dependent monooxygenase elcH. In Phaeosphaeria nodorum (strain SN15 / ATCC MYA-4574 / FGSC 10173) (Glume blotch fungus), this protein is FAD-dependent monooxygenase elcE.